Here is a 1858-residue protein sequence, read N- to C-terminus: MAKDENPSYLHLIFLSSRIRVFILDPPLSLPLSHGQCELQVVEEAAMDPSGLNLQGNPAENQESWTSGVSVGRGTPNLGVGTAVAGRSCPSSTLFPGSSLSSTALLNTMHEGSFPQTALVAGSVSSADEQHGAPPVRPSYNLPAGCTQVPISILVFHRRLTGRGSRCRSPQSRSFMPAPALSGVSEADGAYGPIPQSDFLSLRGPSEVFPGDMAMNHSEPATSYGYNSEYAPMHLQPNGLYTEASNTESEREASQLQQSAEAVICDSLSKLESAMEKIQGQNPQESSGLVAEGSADDNIHKYHQKAKRARTQITHSDKIDLPTQAVSACKEKTITQIEMQIADAERTEALKGEDAPAQKLKTRRRKHRPKVIREDRPAKKQMATTSEEKPLNQKPKRKYVRKNRNPSSLEKCAEPFSDHSISRESRTTVRSSIASVRRRLQFEFGEHGVQRDQSSMTNSWYQNQEKPVNAESSLCSVTKSSVQVEHGQELHMENSPEGLFFGINSKLNKILDEYIHLPEAAPKPSEQIPLAASGHVSEELARKQYDVRHTHDPDSTSYNIERSGLITTKGHKKDLDLNYSNTNGFQMYCSASLLPEMDSTKGSMTKVSKMDKNKKRHYGGESSLAGTQSSIIMRTAAEMLAVYQACGIKKKRSARVRRNSFLSVMDLEKNTSQESTRLPRSCMEALYESSYIKFMTKKRSQKARLNSPNSIQPNIDQKNRFSSETVFSGGFNGLKRSEETFQKTLPQIPDDKRINLDIHCKVPVESSPNTSTPPYMDYLQGVTSKFRYFDLNTEQVHKTEMHLSQTMPSLSSLGATNYLPNALVPYVGGAVVPYQTQFHLVKKQRPRAKVDLDFETTRVWNLLMGKAADPVDGTDVDKERWWKQEREVFQGRANSFIARMRLVQGDRRFSPWKGSVVDSVVGVFLTQNVADHLSSSAYMALAASFPTGSHGNCNDGIAGQDNEEIISTSAVGDRGTFEFFYNGSRPDIGLNFEFSMACEKIHMEPKDNTTVNELTKGENYSLHCKESAGSLCDHETEIDHKAKSISDFSAVELTACMKNLHATQFQKEISLSQSVVTSESILQPGLPLSSGMDHARRNFVGSISDTASQQVGSNFDDGKSLTGNDVTANETEYHGIKAAATNNYVVDEPGIPSGSSLYPFFSAIDCHQLDGRNDTHVSSTSPNCSICSASSNFKIGTIEENSSLFMPFDAHLAQRNGNMIVDTNLSSALESTELPVKLLHCGKRSCYEASEFQDHESLYATGGVIPETATKADDSTLKSGFASFNGLPDTAAQASKPKKSRTTSKKNSENFDWDKLRRQACGNYQMKERIFDRRDSVDWEAVRCADVQRISHAIRERGMNNVLAERIQKFLNRLVTDHGSIDLEWLRDVPPDSAKDYLLSIRGLGLKSVECVRLLTLHHLAFPVDTNVGRICVRLGWVPIQPLPESLQLHLLELYPVLETIQKYLWPRLCKLDQQTLYELHYQMITFGKVFCTKSKPNCNACPMRSECRHFASAFASARLALPSPQDKRLVNLSNQFAFHNGTMPTPNSTPLPQLEGSIHARDVHANNTNPIIEEPASPREEECRELLENDIEDFDEDTDEIPIIKLNMEAFSQNLENCIKESNKDFQSDDITKALVAISNEAASIPVPKLKNVHRLRTEHYVYELPDSHPLMQQLALDQREPDDPSPYLLAIWTPDELKDTREAPKPCCNPQTEGGLCSNEMCHNCVSERENQYRYVRGTVLVPCRTAMRGSFPLNGTYFQVNEVFADHSSSHNPINIPREQLWNLHRRMVYFGTSVPTIFKGLTTEEIQHCFWRGFVCVRGFNMETRAPRPLCPHFHLAASKLRRSSKKAATEQTH.

Over residues 347 to 356 the composition is skewed to basic and acidic residues; it reads TEALKGEDAP. Disordered stretches follow at residues 347-416 and 1288-1309; these read TEAL…AEPF and PDTA…KNSE. Basic residues-rich tracts occupy residues 360-370 and 394-404; these read LKTRRRKHRPK and KPKRKYVRKNR. [4Fe-4S] cluster-binding residues include C1492, C1499, C1502, and C1508.

Belongs to the DNA glycosylase family. DEMETER subfamily. The cofactor is [4Fe-4S] cluster. In terms of tissue distribution, expressed in pistils and immature seeds. Expressed a low levels in roots, leaves and anthers.

The protein resides in the nucleus. Functionally, bifunctional DNA glycosylase/lyase, which excises 5-methylcytosine (5-meC) and 5-hydroxymethylcytosine (5-hmeC), leaving an apyrimidinic (AP) site that is subsequently incised by the lyase activity. Is responsible for the demethylation of methylated cytosine residues of Tos17 retrotransposon DNA. Demethylation of Tos17 cytosine residues promotes its transposition. May be involved in seed development. The sequence is that of Protein ROS1C from Oryza sativa subsp. japonica (Rice).